Reading from the N-terminus, the 102-residue chain is Small ribosomal subunit protein uS10 (102 aa).

Belongs to the universal ribosomal protein uS10 family. As to quaternary structure, part of the 30S ribosomal subunit.

Its function is as follows. Involved in the binding of tRNA to the ribosomes. The protein is Small ribosomal subunit protein uS10 of Rhodospirillum rubrum (strain ATCC 11170 / ATH 1.1.1 / DSM 467 / LMG 4362 / NCIMB 8255 / S1).